Reading from the N-terminus, the 53-residue chain is UPF0391 membrane protein Bcep18194_C7021 (53 aa).

A run of 2 helical transmembrane segments spans residues 5–25 and 30–50; these read AVIFFIIAIVAAVFGFGGIAA and IAKILFYIFVVIFLVTLLLGV.

It belongs to the UPF0391 family.

Its subcellular location is the cell membrane. The chain is UPF0391 membrane protein Bcep18194_C7021 from Burkholderia lata (strain ATCC 17760 / DSM 23089 / LMG 22485 / NCIMB 9086 / R18194 / 383).